The following is a 469-amino-acid chain: Cysteine--tRNA ligase (469 aa).

Cys28 contacts Zn(2+). The short motif at Pro30 to Asn40 is the 'HIGH' region element. Zn(2+) contacts are provided by Cys213, His238, and Glu242. The 'KMSKS' region motif lies at Lys270–Ser274. An ATP-binding site is contributed by Lys273.

Belongs to the class-I aminoacyl-tRNA synthetase family. Monomer. Zn(2+) serves as cofactor.

The protein resides in the cytoplasm. The catalysed reaction is tRNA(Cys) + L-cysteine + ATP = L-cysteinyl-tRNA(Cys) + AMP + diphosphate. The protein is Cysteine--tRNA ligase of Leuconostoc citreum (strain KM20).